The chain runs to 342 residues: Trace amine-associated receptor 8 (342 aa).

At 1-31 (MTSNFSQPVVQLCYEDVNGSCIETPYSPGSR) the chain is on the extracellular side. 2 N-linked (GlcNAc...) asparagine glycosylation sites follow: asparagine 4 and asparagine 18. Disulfide bonds link cysteine 21/cysteine 185 and cysteine 104/cysteine 189. A helical transmembrane segment spans residues 32–52 (VILYTAFSFGSLLAVFGNLLV). Residues 53–67 (MTSVLHFKQLHSPTN) are Cytoplasmic-facing. The chain crosses the membrane as a helical span at residues 68 to 88 (FLIASLACADFLVGVTVMLFS). At 89-111 (MVRTVESCWYFGAKFCTLHSCCD) the chain is on the extracellular side. A helical transmembrane segment spans residues 112-132 (VAFCYSSVLHLCFICIDRYIV). The Cytoplasmic portion of the chain corresponds to 133–146 (VTDPLVYATKFTVS). The helical transmembrane segment at 147 to 167 (VSGICISVSWILPLTYSGAVF) threads the bilayer. Topologically, residues 168-195 (YTGVNDDGLEELVSALNCVGGCQIIVSQ) are extracellular. Residues 196–216 (GWVLIDFLLFFIPTLVMIILY) form a helical membrane-spanning segment. Topologically, residues 217–258 (SKIFLIAKQQAIKIETTSSKVESSSESYKIRVAKRERKAAKT) are cytoplasmic. A helical membrane pass occupies residues 259–279 (LGVTVLAFVISWLPYTVDILI). Position 280 (aspartate 280) is a topological domain, extracellular. The chain crosses the membrane as a helical span at residues 281-301 (AFMGFLTPAYIYEICCWSAYY). Residues 302 to 342 (NSAMNPLIYALFYPWFRKAIKLILSGDVLKASSSTISLFLE) are Cytoplasmic-facing.

It belongs to the G-protein coupled receptor 1 family. In terms of tissue distribution, expressed in kidney and amygdala. Not expressed in other tissues or brain regions tested.

It localises to the cell membrane. Olfactory receptor specific for trace amines. Trace amine compounds are enriched in animal body fluids and act on trace amine-associated receptors (TAARs) to elicit both intraspecific and interspecific innate behaviors. Ligand-binding causes a conformation change that triggers signaling via G alpha proteins, possibly G(i)/G(o) G alpha proteins. The chain is Trace amine-associated receptor 8 (TAAR8) from Homo sapiens (Human).